A 254-amino-acid chain; its full sequence is MLLAIDVGNTNTTLGVYEGAVLRKHWRVETSHTRTYDEYGILLRQLFASAGLEPARVSSVVIASVVPPLAFTLEQMCVRYFDRKPMFVGPGMKTGMPILYENPREVGADRVVNAVAAFERWRCALVVVDFGTATTFDVISAKGEYLGGAICPGIGISMDALARSASKLPRVEFAKPPSVVGKNTVASIQAGLVYGYVGMVDGICAQIAAELATPPKVVATGGLAPLIAGVSRSITEVDEHLTLEGLRILHERNR.

6–13 (DVGNTNTT) serves as a coordination point for ATP. Residues Y100 and 107–110 (GADR) contribute to the substrate site. D109 acts as the Proton acceptor in catalysis. D129 contacts K(+). Position 132 (T132) interacts with ATP. A substrate-binding site is contributed by T184.

The protein belongs to the type III pantothenate kinase family. Homodimer. Requires NH4(+) as cofactor. The cofactor is K(+).

Its subcellular location is the cytoplasm. It catalyses the reaction (R)-pantothenate + ATP = (R)-4'-phosphopantothenate + ADP + H(+). The protein operates within cofactor biosynthesis; coenzyme A biosynthesis; CoA from (R)-pantothenate: step 1/5. In terms of biological role, catalyzes the phosphorylation of pantothenate (Pan), the first step in CoA biosynthesis. This Anaeromyxobacter dehalogenans (strain 2CP-C) protein is Type III pantothenate kinase.